We begin with the raw amino-acid sequence, 369 residues long: Phenylalanine--tRNA ligase alpha subunit (369 aa).

Glu-269 is a Mg(2+) binding site.

It belongs to the class-II aminoacyl-tRNA synthetase family. Phe-tRNA synthetase alpha subunit type 1 subfamily. As to quaternary structure, tetramer of two alpha and two beta subunits. It depends on Mg(2+) as a cofactor.

It localises to the cytoplasm. The catalysed reaction is tRNA(Phe) + L-phenylalanine + ATP = L-phenylalanyl-tRNA(Phe) + AMP + diphosphate + H(+). In Brucella canis (strain ATCC 23365 / NCTC 10854 / RM-666), this protein is Phenylalanine--tRNA ligase alpha subunit.